The primary structure comprises 951 residues: Coiled-coil domain-containing protein 15 (951 aa).

4 coiled-coil regions span residues Leu64–Tyr89, Asp154–Lys193, Met782–Cys813, and Leu839–Lys874.

As to quaternary structure, interacts with POC5, POC1B, CETN2 and FAM161A.

It is found in the cytoplasm. The protein localises to the cytoskeleton. The protein resides in the microtubule organizing center. It localises to the centrosome. Its subcellular location is the centriole. It is found in the centriolar satellite. In terms of biological role, plays an important role in primary cilium assembly, maintenance, and length regulation. Interacts with centriole inner scaffold proteins to promote proper centriole size and integrity and assembly of functional cilia. Required for the recruitment of both the inner scaffold protein POC1B and the distal SFI1/CETN2 complex to centrioles. The protein is Coiled-coil domain-containing protein 15 (CCDC15) of Homo sapiens (Human).